A 173-amino-acid polypeptide reads, in one-letter code: Cell division protein SepF (173 aa).

The tract at residues 31 to 82 is disordered; that stretch reads FEDFDEPLDERPSRNRSPRDDSRNNAVTDSSDHSPSRNERRSPAPAPATADL. Composition is skewed to basic and acidic residues over residues 39–53 and 60–72; these read DERP…DDSR and SSDH…ERRS.

The protein belongs to the SepF family. Homodimer. Interacts with FtsZ.

Its subcellular location is the cytoplasm. Functionally, cell division protein that is part of the divisome complex and is recruited early to the Z-ring. Probably stimulates Z-ring formation, perhaps through the cross-linking of FtsZ protofilaments. Its function overlaps with FtsA. This is Cell division protein SepF from Thermobifida fusca (strain YX).